We begin with the raw amino-acid sequence, 342 residues long: Phenylalanine--tRNA ligase alpha subunit (342 aa).

Residue Glu260 participates in Mg(2+) binding.

Belongs to the class-II aminoacyl-tRNA synthetase family. Phe-tRNA synthetase alpha subunit type 1 subfamily. Tetramer of two alpha and two beta subunits. Requires Mg(2+) as cofactor.

It is found in the cytoplasm. It carries out the reaction tRNA(Phe) + L-phenylalanine + ATP = L-phenylalanyl-tRNA(Phe) + AMP + diphosphate + H(+). This chain is Phenylalanine--tRNA ligase alpha subunit, found in Nocardia farcinica (strain IFM 10152).